The primary structure comprises 215 residues: Adenylate kinase (215 aa).

An ATP-binding site is contributed by 10-15 (GAGKGT). The segment at 30-59 (STGDILRDAVSKGTELGKMAKAIMDRGELV) is NMP. AMP is bound by residues Thr-31, Arg-36, 57-59 (ELV), 82-85 (GYPR), and Gln-89. The segment at 123–160 (NRRVCPNCGKVYNLITLQPKEDEKCDVCGTKLIQRDDD) is LID. Arg-124 lines the ATP pocket. The Zn(2+) site is built by Cys-127 and Cys-130. 133–134 (VY) is an ATP binding site. Residues Cys-147 and Cys-150 each coordinate Zn(2+). Residues Arg-157 and Arg-168 each contribute to the AMP site. Residue Gln-196 coordinates ATP.

This sequence belongs to the adenylate kinase family. Monomer.

Its subcellular location is the cytoplasm. It catalyses the reaction AMP + ATP = 2 ADP. It participates in purine metabolism; AMP biosynthesis via salvage pathway; AMP from ADP: step 1/1. Functionally, catalyzes the reversible transfer of the terminal phosphate group between ATP and AMP. Plays an important role in cellular energy homeostasis and in adenine nucleotide metabolism. In Petrotoga mobilis (strain DSM 10674 / SJ95), this protein is Adenylate kinase.